A 1120-amino-acid chain; its full sequence is MIQQKFPATAKCFYVIDNFTKNLNQDFILSVSNEEEALQLYKQALFFSSNDNIYYFPSYDTIPYDHTSPNANIVSRRAETLTKLITNSKGKLLITHAANLLNKLPPKDFFSKYFLKLYPKIKFTMDELSMLLVENSFTRNTSSIDVGEFAVRGEIIDIILPGPKGYRINFSWDYIESIKEFDINTQISTKYCAELVISPANEIVLNSETIGNFKNNYLRNFGVNHTDNPLYEAVISGRKFAGYEQLLPLFYYSCSSLVDYLNNPICIFDNLSKQAILEFENSYNDFYLARSKANKLKVNNFYPTLSPTSLYFTASAITELLEQKNNILISYENSEQASLIGNISSISFIEKKTIFDKLFEIIKANFHKKIIICSSVLSSFERIKSIIQNYEYTFNEINKLDEAKASVINIGIIPLNQSFYTKEYLFITSSELLEEKTLYTNTNKKLKNILLELDNLKEGEFVVHKDHGIGQFLKLEAFKIQGKLHDFLKILYFGNDKLYVPVENIEVIKKYGSDNAELNKLGSVAWNKSKAKLKNRIKEISLHLIQIAAKRKLNISTPIELDLEAYDKFCANFPFSETEDQLTAINDIREDLTNGMLMDRLICGDVGFGKTEVAMRAVFMVAKSLNEYLPQVAVVVPTTILCSQHFSRFIERFKGFGLNIKQLSSVISSKEANIIRLELASGKINIIIGTHALLHKNTKFFNLKLLIIDEEQHFGVSQKEFLKSLKSSTHVLAMSATPIPRTLQMSMTGLKELSIIATPPLNRLEVRTSVMPFDPVIIRDALLREHFRGGRSFYVAPRIKDMEDIEKQLKQIVPELSYKIAHGKMTPSKIDEVMSEFYVGKFDILISTTIIESGIDIAEANTMIIHKADTLGLSQLYQLRGRIGRGKIRGYAYLTVASNKKITSHSLRRLEIIQNSCSLGSGFTIASHDADLRGFGNLIGEEQSGQIKEVGTELYQEMLEEQIALLKDDPIVLEQAFIPNINLGLSVFIPDSYVSDSALKIGLYRRIGNLSNEMEVEKFKDEMIDRFGLLPIEFNNLLDIVKIKLLCFKLNIENLDSGDDGFVIRFYKNADMTDKILKFVSRYSNQTKIKPNNKLVFIKKLVDKNIITEVNQLLWTLLEI.

Residues 591–756 (DLTNGMLMDR…MTGLKELSII (166 aa)) form the Helicase ATP-binding domain. 604–611 (GDVGFGKT) contacts ATP. The short motif at 709 to 712 (DEEQ) is the DEEQ box element. The Helicase C-terminal domain maps to 777 to 933 (IIRDALLREH…TIASHDADLR (157 aa)).

This sequence in the N-terminal section; belongs to the UvrB family. It in the C-terminal section; belongs to the helicase family. RecG subfamily.

It localises to the cytoplasm. Functionally, couples transcription and DNA repair by recognizing RNA polymerase (RNAP) stalled at DNA lesions. Mediates ATP-dependent release of RNAP and its truncated transcript from the DNA, and recruitment of nucleotide excision repair machinery to the damaged site. This chain is Transcription-repair-coupling factor, found in Rickettsia prowazekii (strain Madrid E).